Here is a 182-residue protein sequence, read N- to C-terminus: Endoribonuclease YbeY (182 aa).

Residues H115, H119, and H125 each contribute to the Zn(2+) site.

This sequence belongs to the endoribonuclease YbeY family. Zn(2+) serves as cofactor.

The protein resides in the cytoplasm. Its function is as follows. Single strand-specific metallo-endoribonuclease involved in late-stage 70S ribosome quality control and in maturation of the 3' terminus of the 16S rRNA. This is Endoribonuclease YbeY from Bifidobacterium longum (strain NCC 2705).